A 665-amino-acid polypeptide reads, in one-letter code: LisH domain-containing protein ARMC9 (665 aa).

The region spanning 7–39 (HESELLGLVKEYLDFAEFEDTLKTFSKECKIKG) is the LisH domain. The stretch at 201–235 (ENGQSNKEMLQQLHQQLVEAERRSMTYLKRYNKIQ) forms a coiled coil. Ser-582 carries the phosphoserine modification. The disordered stretch occupies residues 642–665 (VQWSGDEPLQRPVTPGGHRNGYPV).

Interacts with TOGARAM1, CCDC66, CEP104, CSPP1 and CEP290. Interacts with NDUFAF2.

Its subcellular location is the cytoplasm. It is found in the cytoskeleton. The protein localises to the cilium basal body. It localises to the cell projection. The protein resides in the cilium. Its subcellular location is the microtubule organizing center. It is found in the centrosome. The protein localises to the centriole. In terms of biological role, involved in ciliogenesis. It is required for appropriate acetylation and polyglutamylation of ciliary microtubules, and regulation of cilium length. Acts as a positive regulator of hedgehog (Hh)signaling. May participate in the trafficking and/or retention of GLI2 and GLI3 proteins at the ciliary tip. The sequence is that of LisH domain-containing protein ARMC9 (ARMC9) from Pongo abelii (Sumatran orangutan).